We begin with the raw amino-acid sequence, 96 residues long: Large ribosomal subunit protein eL21 (96 aa).

The disordered stretch occupies residues 1–37 (MPSSNGPMTGTRDKLSNSPRERGMSPPQRAIQEYDEG). The span at 11 to 23 (TRDKLSNSPRERG) shows a compositional bias: basic and acidic residues.

This sequence belongs to the eukaryotic ribosomal protein eL21 family.

The sequence is that of Large ribosomal subunit protein eL21 from Haloquadratum walsbyi (strain DSM 16790 / HBSQ001).